The following is a 495-amino-acid chain: L-arabinose isomerase (495 aa).

Residues E305, E332, H349, and H448 each coordinate Mn(2+).

Belongs to the arabinose isomerase family. The cofactor is Mn(2+).

It carries out the reaction beta-L-arabinopyranose = L-ribulose. It participates in carbohydrate degradation; L-arabinose degradation via L-ribulose; D-xylulose 5-phosphate from L-arabinose (bacterial route): step 1/3. Its function is as follows. Catalyzes the conversion of L-arabinose to L-ribulose. In Mannheimia succiniciproducens (strain KCTC 0769BP / MBEL55E), this protein is L-arabinose isomerase.